The following is a 145-amino-acid chain: Globin-1 (145 aa).

The 145-residue stretch at 1 to 145 folds into the Globin domain; that stretch reads GISADQAKAL…VIVPGMKAGY (145 aa). Positions 63 and 92 each coordinate heme b.

The protein belongs to the globin family. As to quaternary structure, monomer.

In Liolophura japonica (Chiton), this protein is Globin-1.